A 517-amino-acid polypeptide reads, in one-letter code: Cytochrome P450 CYP72A616 (517 aa).

Residues 5 to 25 (VLGALAALLAAAAAWVMRAAA) form a helical membrane-spanning segment. Cysteine 465 provides a ligand contact to heme.

This sequence belongs to the cytochrome P450 family. In terms of tissue distribution, mainly expressed in leaves and, at low levels, in roots, fruits and stems.

It is found in the membrane. It participates in steroid metabolism; cholesterol metabolism. Its function is as follows. Involved in the biosynthesis of spiroketal steroid and saponin natural products from cholesterol such as diosgenin and analogs (e.g. furostanol and spirostanol), plant defense compounds used as main precursors for the industrial production of steroid hormones. During the 5,6-spiroketalization of cholesterol, may catalyze the 27-monohydroxylation of furostanol-type steroid to an intermediate product that undergoes a stereospecific formation of the terminal heterocycle to yield diosgenin. The protein is Cytochrome P450 CYP72A616 of Paris polyphylla (Daiswa polyphylla).